The chain runs to 910 residues: MLRTTRRTLMQGASLVGAGLFAAGRGWALNRLEPIGDTLAEEYPYRDWEDLYRNEFTWDYVGKAAHCINCLGNCAFDIYVKDGIVIREEQLAKYPQISPDIPDANPRGCQKGAIHSTSMYEADRLRYPMKRVGARGEGKWQRISWDQATEEIADKIIDIYEKYGPGKLMTHTGSGNMSMMRMAAPYRFASLVGGVQLDIFTDVGDLNTGAHLAYGNALESFTSDAWFGADYIMFLLFNPVATRIPDAHFLWEAKWNGARVVSVAPDYNPSSIHSDLWMPIKQGADPFLAMSMVNVIIEGKLYNEAFMKEQTDLPILVRSDNGMLLREADLEEGGSDQVFYHWDSRTGAAVKVKGSMGSEEKTLVLGDVDPALEGSFEVGGIPVTTVFEKVRAEAAKYPPEETAAITGIGPGVVRAEAETFARAKKALLMTGFNIGRYSNGIYTSWALTLMLALTGHGGRTGGLDTSWIAWNQPALLELAFFDFKKLPRLEAGGLGEFVRGGMMEHSRQHYDNDKLKARTGFDLDELQEMIDESIDAGWMPYYGDMKGLISIADNKFRRNKNAEAYRERILEEVEELFVDINVRMDSTAQWADYLLPAAAHYEAWDLRSIAFHRFVNVFSRPVPPIGEAKSDWEIMEILTRKIQERAIARGITGYEDGDVTRDFATIHDDYTMDGTLMTDHDVVSWLVENGPEFAGATLEEGVERGFFVMGEDAGPTQKLRPSEPYHAFLQQTEGKEPYKTMTGRITFFVDHPRFVRLGATVPTARHHAGRDASNYPLNFFSPHTRWGIHSNWRSNKFMLRLQRGEPNIYISPQLAAAKGIADGAQVRVFNELSFFFAQAKFYPSLPPDTIMMEHGWEPHQFPNWRPMNVCMATLLQPLELVGGWGHLNFSLWHWNANQLAHESSVDIEPA.

The segment at residues 1–28 (MLRTTRRTLMQGASLVGAGLFAAGRGWA) is a signal peptide (tat-type signal). In terms of domain architecture, 4Fe-4S Mo/W bis-MGD-type spans 59 to 123 (DYVGKAAHCI…IHSTSMYEAD (65 aa)). Residues His-66, Cys-70, Cys-74, and Cys-109 each contribute to the [4Fe-4S] cluster site.

It belongs to the prokaryotic molybdopterin-containing oxidoreductase family. In terms of assembly, heterotrimer of alpha, beta and gamma subunits. The cofactor is [4Fe-4S] cluster. Mo-bis(molybdopterin guanine dinucleotide) serves as cofactor. In terms of processing, predicted to be exported by the Tat system. The position of the signal peptide cleavage has been experimentally proven.

It localises to the periplasm. It catalyses the reaction 2 Fe(III)-[cytochrome c2] + dimethyl sulfide + H2O = 2 Fe(II)-[cytochrome c2] + dimethyl sulfoxide + 2 H(+). Its function is as follows. Allows photoautotrophic growth on dimethyl sulfide (DMS) as the sole electron donor. The polypeptide is Dimethylsulfide dehydrogenase subunit alpha (ddhA) (Rhodovulum sulfidophilum (Rhodobacter sulfidophilus)).